Here is a 465-residue protein sequence, read N- to C-terminus: Myosin-6 (465 aa).

The region spanning Ile1–Pro35 is the Myosin motor domain. The stretch at Leu36–Arg465 forms a coiled coil. 2 positions are modified to phosphoserine: Ser285 and Ser334. At Tyr456 the chain carries Phosphotyrosine.

Muscle myosin is a hexameric protein that consists of 2 heavy chain subunits (MHC), 2 alkali light chain subunits (MLC) and 2 regulatory light chain subunits (MLC-2).

It localises to the cytoplasm. The protein localises to the myofibril. Muscle contraction. The sequence is that of Myosin-6 (MYH6) from Oryctolagus cuniculus (Rabbit).